The sequence spans 87 residues: Protein anon-73B1 (87 aa).

The chain crosses the membrane as a helical span at residues 25 to 47; it reads LLIRYGLYVGALFQFVCISAAVL. The interval 52–87 is disordered; it reads PDVNSNPETGEVTEREGEPVRTRLHKIRKLEKKKRR. Residues 63-72 show a composition bias toward basic and acidic residues; that stretch reads VTEREGEPVR. Positions 73 to 87 are enriched in basic residues; that stretch reads TRLHKIRKLEKKKRR.

The protein belongs to the UPF0239 family.

The protein resides in the membrane. The sequence is that of Protein anon-73B1 from Drosophila erecta (Fruit fly).